A 350-amino-acid polypeptide reads, in one-letter code: TATA box-binding protein-like 2 (350 aa).

The disordered stretch occupies residues 82–150 (ENRDQTVTGN…QPSPETPNSN (69 aa)). The segment covering 94–116 (ASEESCRTRDRQSQLQLPDEHGS) has biased composition (basic and acidic residues). Composition is skewed to polar residues over residues 118–128 (LNLNSNSSPDP) and 139–150 (SNQPSPETPNSN).

It belongs to the TBP family. As to quaternary structure, interacts with TAF3. As to expression, expressed in myotubes and myofibers (at protein level). Expressed in a wide variety of tissues with highest levels in heart, lung, liver, uterus and placenta and especially the gonads. Expression is higher in the ovary than the testis, and within the ovary expression is localized to the oocytes.

It localises to the cytoplasm. It is found in the nucleus. Functionally, transcription factor required in complex with TAF3 for the differentiation of myoblasts into myocytes. The complex replaces TFIID at specific promoters at an early stage in the differentiation process. The sequence is that of TATA box-binding protein-like 2 from Mus musculus (Mouse).